A 454-amino-acid polypeptide reads, in one-letter code: GTPase Der (454 aa).

2 consecutive EngA-type G domains span residues 4 to 168 and 178 to 352; these read PQVA…PEKD and MKIA…KQAQ. Residues 10–17, 57–61, 120–123, 184–191, 231–235, and 296–299 contribute to the GTP site; these read GRPNVGKS, DTGGM, NKAD, GRRNVGKS, DTPGL, and NKWD. The KH-like domain maps to 353-437; it reads SRVSTGELNR…PIKLYMQQRS (85 aa).

This sequence belongs to the TRAFAC class TrmE-Era-EngA-EngB-Septin-like GTPase superfamily. EngA (Der) GTPase family. As to quaternary structure, associates with the 50S ribosomal subunit.

GTPase that plays an essential role in the late steps of ribosome biogenesis. In Rhodopirellula baltica (strain DSM 10527 / NCIMB 13988 / SH1), this protein is GTPase Der.